Here is a 110-residue protein sequence, read N- to C-terminus: Mitochondrial pyruvate carrier 1 (110 aa).

Helical transmembrane passes span 20 to 36 (HFWGPIANWGFVAAGLV) and 44 to 61 (MISGNMSSAMCVYSALFM).

Belongs to the mitochondrial pyruvate carrier (MPC) (TC 2.A.105) family.

Its subcellular location is the mitochondrion inner membrane. Its function is as follows. Mediates the uptake of pyruvate into mitochondria. This Arabidopsis thaliana (Mouse-ear cress) protein is Mitochondrial pyruvate carrier 1.